The sequence spans 987 residues: Ephrin type-B receptor 2 (987 aa).

The N-terminal stretch at 1-19 is a signal peptide; that stretch reads MGPLWFCCLPLALLPLLAA. At 20–544 the chain is on the extracellular side; it reads VEETLMDSTT…QTSVQEKLPL (525 aa). The 183-residue stretch at 21–203 folds into the Eph LBD domain; that stretch reads EETLMDSTTA…FYRKCPRVIQ (183 aa). Intrachain disulfides connect Cys-63–Cys-185 and Cys-98–Cys-108. Asn-266, Asn-337, Asn-429, Asn-478, and Asn-483 each carry an N-linked (GlcNAc...) asparagine glycan. Fibronectin type-III domains follow at residues 325 to 435 and 436 to 531; these read IPSA…TNQA and APSA…TMTE. Residues 545–565 traverse the membrane as a helical segment; sequence IIGSSAAGLVFLIAVVVIIIV. Residues 566–987 are Cytoplasmic-facing; the sequence is CNRRGFERAD…QMNQIQSVEV (422 aa). A Protein kinase domain is found at 622–885; sequence VKIEQVIGAG…QIVNTLDKMI (264 aa). ATP-binding positions include 628–636 and Lys-654; that span reads IGAGEFGEV. Catalysis depends on Asp-747, which acts as the Proton acceptor. Lys-892 participates in a covalent cross-link: Glycyl lysine isopeptide (Lys-Gly) (interchain with G-Cter in ubiquitin). An SAM domain is found at 914-978; the sequence is TSFNTVDEWL…LNSIQVMRAQ (65 aa). The PDZ-binding signature appears at 985 to 987; sequence VEV.

It belongs to the protein kinase superfamily. Tyr protein kinase family. Ephrin receptor subfamily. As to quaternary structure, heterotetramer upon binding of the ligand. The heterotetramer is composed of an ephrin dimer and a receptor dimer. Oligomerization is probably required to induce biological responses. In terms of processing, ligand binding induces cleavage by matrix metalloproteinases (MMPs) such as MMP7/MMP9, producing an EphB2/N-terminal fragment (NTF) and a C-terminal long fragment (EphB2-LF). EphB2-LF is further cleaved by MMPs, producing EphB2/CTF1 which is further cleaved by the PS1/gamma-secretase producing EphB2/CTF2. Polyubiquitinated; ligand binding stimulates ubiquitination. Ubiquitinated by RNF186 at Lys-892, mainly through 'Lys-27'-linked polyubiquitin chains.

The protein resides in the cell membrane. The protein localises to the cell projection. It localises to the axon. It is found in the dendrite. The catalysed reaction is L-tyrosyl-[protein] + ATP = O-phospho-L-tyrosyl-[protein] + ADP + H(+). Receptor tyrosine kinase which binds promiscuously transmembrane ephrin-B family ligands residing on adjacent cells, leading to contact-dependent bidirectional signaling into neighboring cells. The signaling pathway downstream of the receptor is referred to as forward signaling while the signaling pathway downstream of the ephrin ligand is referred to as reverse signaling. Functions in axon guidance during development. In addition to axon guidance, also regulates dendritic spines development and maturation and stimulates the formation of excitatory synapses. The sequence is that of Ephrin type-B receptor 2 (EPHB2) from Coturnix japonica (Japanese quail).